Consider the following 560-residue polypeptide: MNNNIINLIAAVVLSLSIIFGWQYFFVKPEQKKQQQRIAMHKSENLNKQKLKALAEPASDIAVQEASQVQRIKIESESLTGSIALKGLRFDDLILKKYKQDLSQNSPAVRLFSPANTENAYFAEIGLVSNLNSVKLPNSNTVWNSDSEVLSPEKPVNLFWINEDGIKFLVTITVDKNYLFTIEQTIINNSDKELPVQSYGLINRKYISLEKAVNILHQGPIGCIDENLKEYSYDDIKDKKSTKFALSKVDWIGITDKYWLSSLIPDKSSRYSSNFNYALKQGTERYQVDFISPVQVIKPGENLSIKSRIFAGAKKVDLLDEYEKSYDIKLFDRAIDFGWFYIITKPVFYAMNFFYGYVGNFGISILIVTVIIKLLMFTLANKSYRSMKKMKNLQPEIDRIKNLYNNDKARLNQEIMALYKKEKVNPVAGCLPILVQIPVFFSIYKVLYVTIEMRQAPFFGWIKDLSSPDPTTIFNLFGLLPFAPPSFLMIGAWPILMAITMFLHQKMSPELADPIQAQVMKFMPLIFLFMFSSFPVGLLIYWSWNNILSIIQQYYINKFN.

6 helical membrane-spanning segments follow: residues 5–25 (IINLIAAVVLSLSIIFGWQYF), 334–354 (AIDFGWFYIITKPVFYAMNFF), 357–377 (YVGNFGISILIVTVIIKLLMF), 431–451 (LPILVQIPVFFSIYKVLYVTI), 476–496 (LFGLLPFAPPSFLMIGAWPIL), and 522–542 (FMPLIFLFMFSSFPVGLLIYW).

It belongs to the OXA1/ALB3/YidC family. Type 1 subfamily. In terms of assembly, interacts with the Sec translocase complex via SecD. Specifically interacts with transmembrane segments of nascent integral membrane proteins during membrane integration.

Its subcellular location is the cell inner membrane. Required for the insertion and/or proper folding and/or complex formation of integral membrane proteins into the membrane. Involved in integration of membrane proteins that insert both dependently and independently of the Sec translocase complex, as well as at least some lipoproteins. Aids folding of multispanning membrane proteins. In Rickettsia prowazekii (strain Madrid E), this protein is Membrane protein insertase YidC.